Reading from the N-terminus, the 370-residue chain is Quinolinate synthase (370 aa).

Residues H62 and S83 each coordinate iminosuccinate. C128 is a [4Fe-4S] cluster binding site. Residues 154–156 (YAN) and S171 each bind iminosuccinate. A [4Fe-4S] cluster-binding site is contributed by C215. Iminosuccinate is bound by residues 241-243 (HPE) and T258. C312 is a binding site for [4Fe-4S] cluster.

Belongs to the quinolinate synthase family. Type 1 subfamily. The cofactor is [4Fe-4S] cluster.

It is found in the cytoplasm. The catalysed reaction is iminosuccinate + dihydroxyacetone phosphate = quinolinate + phosphate + 2 H2O + H(+). It functions in the pathway cofactor biosynthesis; NAD(+) biosynthesis; quinolinate from iminoaspartate: step 1/1. In terms of biological role, catalyzes the condensation of iminoaspartate with dihydroxyacetone phosphate to form quinolinate. This is Quinolinate synthase from Neisseria meningitidis serogroup C / serotype 2a (strain ATCC 700532 / DSM 15464 / FAM18).